The following is a 283-amino-acid chain: Glutamate racemase (283 aa).

Substrate is bound by residues Asp28–Ser29 and Tyr60–Gly61. Cys92 serves as the catalytic Proton donor/acceptor. Asn93–Ser94 contributes to the substrate binding site. Catalysis depends on Cys204, which acts as the Proton donor/acceptor. Thr205 to His206 serves as a coordination point for substrate.

This sequence belongs to the aspartate/glutamate racemases family.

It catalyses the reaction L-glutamate = D-glutamate. Its pathway is cell wall biogenesis; peptidoglycan biosynthesis. Its function is as follows. Provides the (R)-glutamate required for cell wall biosynthesis. The sequence is that of Glutamate racemase from Erwinia tasmaniensis (strain DSM 17950 / CFBP 7177 / CIP 109463 / NCPPB 4357 / Et1/99).